A 159-amino-acid chain; its full sequence is H/ACA ribonucleoprotein complex subunit 2-like protein (159 aa).

The tract at residues Met-1–Arg-28 is disordered.

This sequence belongs to the eukaryotic ribosomal protein eL8 family. In terms of assembly, component of the small nucleolar ribonucleoprotein particle containing H/ACA-type snoRNAs (H/ACA snoRNPs). Component of the telomerase holoenzyme complex.

Its subcellular location is the nucleus. It localises to the nucleolus. Required for ribosome biogenesis. Part of a complex which catalyzes pseudouridylation of rRNA. This involves the isomerization of uridine such that the ribose is subsequently attached to C5, instead of the normal N1. Pseudouridine ('psi') residues may serve to stabilize the conformation of rRNAs. In Branchiostoma belcheri (Amphioxus), this protein is H/ACA ribonucleoprotein complex subunit 2-like protein.